Consider the following 181-residue polypeptide: Acireductone dioxygenase (181 aa).

Histidine 97, histidine 99, glutamate 103, and histidine 141 together coordinate Fe(2+). 4 residues coordinate Ni(2+): histidine 97, histidine 99, glutamate 103, and histidine 141.

Belongs to the acireductone dioxygenase (ARD) family. As to quaternary structure, monomer. Requires Fe(2+) as cofactor. It depends on Ni(2+) as a cofactor.

The catalysed reaction is 1,2-dihydroxy-5-(methylsulfanyl)pent-1-en-3-one + O2 = 3-(methylsulfanyl)propanoate + CO + formate + 2 H(+). The enzyme catalyses 1,2-dihydroxy-5-(methylsulfanyl)pent-1-en-3-one + O2 = 4-methylsulfanyl-2-oxobutanoate + formate + 2 H(+). The protein operates within amino-acid biosynthesis; L-methionine biosynthesis via salvage pathway; L-methionine from S-methyl-5-thio-alpha-D-ribose 1-phosphate: step 5/6. Catalyzes 2 different reactions between oxygen and the acireductone 1,2-dihydroxy-3-keto-5-methylthiopentene (DHK-MTPene) depending upon the metal bound in the active site. Fe-containing acireductone dioxygenase (Fe-ARD) produces formate and 2-keto-4-methylthiobutyrate (KMTB), the alpha-ketoacid precursor of methionine in the methionine recycle pathway. Ni-containing acireductone dioxygenase (Ni-ARD) produces methylthiopropionate, carbon monoxide and formate, and does not lie on the methionine recycle pathway. This chain is Acireductone dioxygenase, found in Pseudomonas savastanoi pv. phaseolicola (strain 1448A / Race 6) (Pseudomonas syringae pv. phaseolicola (strain 1448A / Race 6)).